The sequence spans 311 residues: 4-diphosphocytidyl-2-C-methyl-D-erythritol kinase (311 aa).

The active site involves lysine 16. An ATP-binding site is contributed by 100–110 (PIGAGLAGGSS). Aspartate 142 is an active-site residue.

Belongs to the GHMP kinase family. IspE subfamily.

It catalyses the reaction 4-CDP-2-C-methyl-D-erythritol + ATP = 4-CDP-2-C-methyl-D-erythritol 2-phosphate + ADP + H(+). It functions in the pathway isoprenoid biosynthesis; isopentenyl diphosphate biosynthesis via DXP pathway; isopentenyl diphosphate from 1-deoxy-D-xylulose 5-phosphate: step 3/6. Catalyzes the phosphorylation of the position 2 hydroxy group of 4-diphosphocytidyl-2C-methyl-D-erythritol. The protein is 4-diphosphocytidyl-2-C-methyl-D-erythritol kinase of Prochlorococcus marinus (strain MIT 9215).